The chain runs to 233 residues: Protein lin-7 homolog A (233 aa).

The L27 domain occupies 25–80 (LDRDVARAIELLEKLQESGEVPVHKLQSLKKVLQSEFCTAIREVYQYMHETITVNG). Positions 108-190 (VVELPKTDEG…SVKLVVRYTP (83 aa)) constitute a PDZ domain.

This sequence belongs to the lin-7 family. As to quaternary structure, forms a complex with CASK and CASKIN1. Component of the brain-specific heterotrimeric complex (LIN-10-LIN-2-LIN-7 complex) composed of at least APBA1, CASK, and LIN7, which associates with the motor protein KIF17 to transport vesicles along microtubules. Can also interact with other modular proteins containing protein-protein interaction domains like PALS1, PALS2, MPP7, DLG1, DLG2 and DLG3 through its L27 domain. Interacts with DLG4, GRIN2B and MARCHF11 as well as CDH1 and CTNNB1, the channels KCNJ12/Kir2.2, KCNJ4/Kir2.3 and probably KCNJ2/Kir2.1 and SLC6A12/BGT-1 via its PDZ domain. The association of LIN7A with cadherin and beta-catenin is calcium-dependent, occurs at synaptic junctions and requires the actin cytoskeleton. Interacts with EGFR, ERBB2, ERBB3 and ERBB4 with both PDZ and KID domains. Associates with KIF17 via APBA1. Interacts with HTR4. Forms a tripartite complex composed of DLG1, MPP7 and LIN7 (LIN7A or LIN7C).

The protein localises to the cell membrane. Its subcellular location is the basolateral cell membrane. It localises to the cell junction. It is found in the postsynaptic density membrane. The protein resides in the tight junction. In terms of biological role, plays a role in establishing and maintaining the asymmetric distribution of channels and receptors at the plasma membrane of polarized cells. Forms membrane-associated multiprotein complexes that may regulate delivery and recycling of proteins to the correct membrane domains. The tripartite complex composed of LIN7 (LIN7A, LIN7B or LIN7C), CASK and APBA1 associates with the motor protein KIF17 to transport vesicles containing N-methyl-D-aspartate (NMDA) receptor subunit NR2B along microtubules. This complex may have the potential to couple synaptic vesicle exocytosis to cell adhesion in brain. Ensures the proper localization of GRIN2B (subunit 2B of the NMDA receptor) to neuronal postsynaptic density and may function in localizing synaptic vesicles at synapses where it is recruited by beta-catenin and cadherin. Required to localize Kir2 channels, GABA transporter (SLC6A12) and EGFR/ERBB1, ERBB2, ERBB3 and ERBB4 to the basolateral membrane of epithelial cells. The chain is Protein lin-7 homolog A (LIN7A) from Bos taurus (Bovine).